The primary structure comprises 141 residues: Small ribosomal subunit protein uS12 (141 aa).

The protein belongs to the universal ribosomal protein uS12 family. In terms of assembly, part of the 30S ribosomal subunit.

With S4 and S5 plays an important role in translational accuracy. Located at the interface of the 30S and 50S subunits. This is Small ribosomal subunit protein uS12 from Methanothermobacter thermautotrophicus (strain ATCC 29096 / DSM 1053 / JCM 10044 / NBRC 100330 / Delta H) (Methanobacterium thermoautotrophicum).